The chain runs to 181 residues: Adenylate kinase (181 aa).

An ATP-binding site is contributed by 10–15 (GAGKGT). Residues 30-59 (STGELFRKNIQDGTKLGIEAKRYLDAGDLV) form an NMP region. AMP-binding positions include Thr-31, Arg-36, 57–59 (DLV), 85–88 (GYPR), and Gln-92. The interval 126–132 (GRGRADD) is LID. Residue Arg-127 coordinates ATP. 2 residues coordinate AMP: Arg-129 and Arg-140. Residue Gly-166 participates in ATP binding.

It belongs to the adenylate kinase family. Monomer.

Its subcellular location is the cytoplasm. It catalyses the reaction AMP + ATP = 2 ADP. The protein operates within purine metabolism; AMP biosynthesis via salvage pathway; AMP from ADP: step 1/1. Functionally, catalyzes the reversible transfer of the terminal phosphate group between ATP and AMP. Plays an important role in cellular energy homeostasis and in adenine nucleotide metabolism. The sequence is that of Adenylate kinase from Mycobacterium marinum (strain ATCC BAA-535 / M).